We begin with the raw amino-acid sequence, 330 residues long: Phenylalanine--tRNA ligase alpha subunit (330 aa).

Mg(2+) is bound at residue Glu255.

This sequence belongs to the class-II aminoacyl-tRNA synthetase family. Phe-tRNA synthetase alpha subunit type 1 subfamily. In terms of assembly, tetramer of two alpha and two beta subunits. Mg(2+) is required as a cofactor.

The protein localises to the cytoplasm. The catalysed reaction is tRNA(Phe) + L-phenylalanine + ATP = L-phenylalanyl-tRNA(Phe) + AMP + diphosphate + H(+). This Acinetobacter baumannii (strain SDF) protein is Phenylalanine--tRNA ligase alpha subunit.